A 937-amino-acid polypeptide reads, in one-letter code: Lysosomal alpha-glucosidase (937 aa).

An N-terminal signal peptide occupies residues Met-1–Leu-23. Residues Gly-24 to Arg-60 constitute a propeptide that is removed on maturation. The 51-residue stretch at Thr-68–Pro-118 folds into the P-type domain. Cystine bridges form between Cys-70–Cys-97, Cys-80–Cys-96, and Cys-91–Cys-114. Residues Asn-127, Asn-220, Asn-259, and Asn-377 are each glycosylated (N-linked (GlcNAc...) asparagine). Asp-391 is a substrate binding site. N-linked (GlcNAc...) asparagine glycosylation occurs at Asn-457. The active-site Nucleophile is Asp-505. The active site involves Glu-508. An intrachain disulfide couples Cys-520 to Cys-545. Substrate contacts are provided by Arg-587 and Asp-603. A disulfide bond links Cys-634 and Cys-645. N-linked (GlcNAc...) asparagine glycosylation occurs at Asn-639. Residue His-661 coordinates substrate. Asn-867, Asn-888, and Asn-910 each carry an N-linked (GlcNAc...) asparagine glycan.

It belongs to the glycosyl hydrolase 31 family.

The protein resides in the lysosome. It is found in the lysosome membrane. The enzyme catalyses Hydrolysis of terminal, non-reducing (1-&gt;4)-linked alpha-D-glucose residues with release of alpha-D-glucose.. Essential for the degradation of glycogen in lysosomes. Has highest activity on alpha-1,4-linked glycosidic linkages, but can also hydrolyze alpha-1,6-linked glucans. This chain is Lysosomal alpha-glucosidase (GAA), found in Bos taurus (Bovine).